Reading from the N-terminus, the 93-residue chain is Acylphosphatase (93 aa).

An Acylphosphatase-like domain is found at 5 to 93 (TAILRVTGFV…EDRKTFDIVY (89 aa)). Active-site residues include R20 and N38.

It belongs to the acylphosphatase family.

It catalyses the reaction an acyl phosphate + H2O = a carboxylate + phosphate + H(+). In Listeria welshimeri serovar 6b (strain ATCC 35897 / DSM 20650 / CCUG 15529 / CIP 8149 / NCTC 11857 / SLCC 5334 / V8), this protein is Acylphosphatase (acyP).